Here is a 213-residue protein sequence, read N- to C-terminus: Ribonuclease HII (213 aa).

The RNase H type-2 domain occupies 18–213 (GLHAGVDEVG…RPVKERLAKR (196 aa)). 3 residues coordinate a divalent metal cation: aspartate 24, glutamate 25, and aspartate 116.

Belongs to the RNase HII family. Mn(2+) serves as cofactor. Mg(2+) is required as a cofactor.

The protein localises to the cytoplasm. The enzyme catalyses Endonucleolytic cleavage to 5'-phosphomonoester.. Endonuclease that specifically degrades the RNA of RNA-DNA hybrids. This chain is Ribonuclease HII, found in Shewanella woodyi (strain ATCC 51908 / MS32).